The following is a 288-amino-acid chain: Acetylglutamate kinase (288 aa).

Residues 66-67, Arg88, and Asn182 contribute to the substrate site; that span reads GG.

Belongs to the acetylglutamate kinase family. ArgB subfamily.

It localises to the cytoplasm. It catalyses the reaction N-acetyl-L-glutamate + ATP = N-acetyl-L-glutamyl 5-phosphate + ADP. It participates in amino-acid biosynthesis; L-arginine biosynthesis; N(2)-acetyl-L-ornithine from L-glutamate: step 2/4. Catalyzes the ATP-dependent phosphorylation of N-acetyl-L-glutamate. This Brachyspira hyodysenteriae (strain ATCC 49526 / WA1) protein is Acetylglutamate kinase.